Reading from the N-terminus, the 86-residue chain is Cell division topological specificity factor (86 aa).

The protein belongs to the MinE family.

Prevents the cell division inhibition by proteins MinC and MinD at internal division sites while permitting inhibition at polar sites. This ensures cell division at the proper site by restricting the formation of a division septum at the midpoint of the long axis of the cell. This Alteromonas mediterranea (strain DSM 17117 / CIP 110805 / LMG 28347 / Deep ecotype) protein is Cell division topological specificity factor.